The primary structure comprises 248 residues: 2,3-bisphosphoglycerate-dependent phosphoglycerate mutase (248 aa).

Substrate is bound by residues 8–15 (RHGESEWN), 21–22 (TG), arginine 60, 87–90 (ERHY), lysine 98, 114–115 (RR), and 183–184 (GN). Histidine 9 (tele-phosphohistidine intermediate) is an active-site residue. The Proton donor/acceptor role is filled by glutamate 87.

It belongs to the phosphoglycerate mutase family. BPG-dependent PGAM subfamily.

The enzyme catalyses (2R)-2-phosphoglycerate = (2R)-3-phosphoglycerate. Its pathway is carbohydrate degradation; glycolysis; pyruvate from D-glyceraldehyde 3-phosphate: step 3/5. Catalyzes the interconversion of 2-phosphoglycerate and 3-phosphoglycerate. This chain is 2,3-bisphosphoglycerate-dependent phosphoglycerate mutase, found in Borreliella burgdorferi (strain ATCC 35210 / DSM 4680 / CIP 102532 / B31) (Borrelia burgdorferi).